An 834-amino-acid polypeptide reads, in one-letter code: Glycerol-3-phosphate acyltransferase (834 aa).

The short motif at 309 to 314 (CHRSHI) is the HXXXXD motif element.

It belongs to the GPAT/DAPAT family.

It localises to the cell inner membrane. The enzyme catalyses sn-glycerol 3-phosphate + an acyl-CoA = a 1-acyl-sn-glycero-3-phosphate + CoA. It participates in phospholipid metabolism; CDP-diacylglycerol biosynthesis; CDP-diacylglycerol from sn-glycerol 3-phosphate: step 1/3. The chain is Glycerol-3-phosphate acyltransferase from Pseudomonas fluorescens (strain Pf0-1).